We begin with the raw amino-acid sequence, 213 residues long: Orotate phosphoribosyltransferase (213 aa).

K26 is a binding site for 5-phospho-alpha-D-ribose 1-diphosphate. Residue F34–F35 participates in orotate binding. 5-phospho-alpha-D-ribose 1-diphosphate is bound by residues Y72–K73, R99, K100, K103, H105, and D124–A132. The orotate site is built by T128 and R156.

The protein belongs to the purine/pyrimidine phosphoribosyltransferase family. PyrE subfamily. In terms of assembly, homodimer. It depends on Mg(2+) as a cofactor.

The catalysed reaction is orotidine 5'-phosphate + diphosphate = orotate + 5-phospho-alpha-D-ribose 1-diphosphate. It participates in pyrimidine metabolism; UMP biosynthesis via de novo pathway; UMP from orotate: step 1/2. Functionally, catalyzes the transfer of a ribosyl phosphate group from 5-phosphoribose 1-diphosphate to orotate, leading to the formation of orotidine monophosphate (OMP). The chain is Orotate phosphoribosyltransferase from Salmonella choleraesuis (strain SC-B67).